A 571-amino-acid polypeptide reads, in one-letter code: MRLLFGDAAASARRPEEYEARYPRRALPKGAMVTRYAPSPTGFMHIGGIFVSLINKRLSLQSEGVFYLRLEDTDVKRAIPGALDTIVDSLARFDLSPQEGVLRAPAKDGDASSRGEFVQQGSYGPYIQTERVEIYRDYAIDLIRRGFAYPCFCTVEELDAIRQEQMALTVKPGVHGRWAKWRDAPLARVKEALAGGTPFVLRLRAPDDVSGRVEWKDGVKGVISMPVNDLDTILLKSDGIPTYHFAHAIDDHLMRTTHVIRGDEWISSMPLHLQLFRTLGFRPVEYAHVPPIQKLDRVEEVDPETGETKVSDARRKLSKRKDPEANIAYYREIGVPETGTIEYLLNIANSAFEDWRKANPDKPYSAFPLKLNKLAPGGALSDMVKLKSVSQAVVSRMSAEDVYAQGLDWAREHDKELAALMERDPEYTKRALGIERGGKKSNKRITTWPDLRPQLFFFYDELYDRVDALDFPENVPEGDRQPLLRQMLDTFDPADSKEAWFEKIRQIAVASGYAGEVKQYKASPESWKGHVGDVSMLLRVAVCGTRNSPDLTEVMAVLGEPRVRARIARFL.

Positions P38 to G48 match the 'HIGH' region motif. The short motif at K316–R320 is the 'KMSKS' region element. Residue K319 coordinates ATP.

The protein belongs to the class-I aminoacyl-tRNA synthetase family. Glutamate--tRNA ligase type 1 subfamily. Monomer.

It is found in the cytoplasm. It carries out the reaction tRNA(Glu) + L-glutamate + ATP = L-glutamyl-tRNA(Glu) + AMP + diphosphate. In terms of biological role, catalyzes the attachment of glutamate to tRNA(Glu) in a two-step reaction: glutamate is first activated by ATP to form Glu-AMP and then transferred to the acceptor end of tRNA(Glu). This is Glutamate--tRNA ligase from Sorangium cellulosum (strain So ce56) (Polyangium cellulosum (strain So ce56)).